The sequence spans 565 residues: Dihydroxy-acid dehydratase (565 aa).

Position 83 (aspartate 83) interacts with Mg(2+). Cysteine 124 is a binding site for [2Fe-2S] cluster. Aspartate 125 and lysine 126 together coordinate Mg(2+). An N6-carboxylysine modification is found at lysine 126. Cysteine 197 serves as a coordination point for [2Fe-2S] cluster. Glutamate 451 contacts Mg(2+). Serine 477 acts as the Proton acceptor in catalysis.

Belongs to the IlvD/Edd family. In terms of assembly, homodimer. Requires [2Fe-2S] cluster as cofactor. Mg(2+) serves as cofactor.

It catalyses the reaction (2R)-2,3-dihydroxy-3-methylbutanoate = 3-methyl-2-oxobutanoate + H2O. It carries out the reaction (2R,3R)-2,3-dihydroxy-3-methylpentanoate = (S)-3-methyl-2-oxopentanoate + H2O. It functions in the pathway amino-acid biosynthesis; L-isoleucine biosynthesis; L-isoleucine from 2-oxobutanoate: step 3/4. The protein operates within amino-acid biosynthesis; L-valine biosynthesis; L-valine from pyruvate: step 3/4. Functionally, functions in the biosynthesis of branched-chain amino acids. Catalyzes the dehydration of (2R,3R)-2,3-dihydroxy-3-methylpentanoate (2,3-dihydroxy-3-methylvalerate) into 2-oxo-3-methylpentanoate (2-oxo-3-methylvalerate) and of (2R)-2,3-dihydroxy-3-methylbutanoate (2,3-dihydroxyisovalerate) into 2-oxo-3-methylbutanoate (2-oxoisovalerate), the penultimate precursor to L-isoleucine and L-valine, respectively. The protein is Dihydroxy-acid dehydratase of Symbiobacterium thermophilum (strain DSM 24528 / JCM 14929 / IAM 14863 / T).